The primary structure comprises 242 residues: Myogenic factor 6 (242 aa).

Residues 31-63 are disordered; sequence SPLYPGSDGTLSPCQDQMPPEAGSDSSGEEHVL. One can recognise a bHLH domain in the interval 93-144; that stretch reads DRRKAATLRERRRLKKINEAFEALKRRTVANPNQRLPKVEILRSAISYIERL.

Efficient DNA binding requires dimerization with another bHLH protein. Interacts with CSRP3. Skeletal muscle.

It localises to the nucleus. Functionally, involved in muscle differentiation (myogenic factor). Induces fibroblasts to differentiate into myoblasts. Probable sequence specific DNA-binding protein. The sequence is that of Myogenic factor 6 (MYF6) from Homo sapiens (Human).